A 1279-amino-acid chain; its full sequence is ATP-dependent helicase/nuclease subunit A (1279 aa).

A UvrD-like helicase ATP-binding domain is found at threonine 4–arginine 499. Alanine 25–threonine 32 contacts ATP. The UvrD-like helicase C-terminal domain occupies glutamate 526–glycine 853.

It belongs to the helicase family. AddA subfamily. Heterodimer of AddA and AddB/RexB. Requires Mg(2+) as cofactor.

It catalyses the reaction Couples ATP hydrolysis with the unwinding of duplex DNA by translocating in the 3'-5' direction.. It carries out the reaction ATP + H2O = ADP + phosphate + H(+). Functionally, the heterodimer acts as both an ATP-dependent DNA helicase and an ATP-dependent, dual-direction single-stranded exonuclease. Recognizes the chi site generating a DNA molecule suitable for the initiation of homologous recombination. The AddA nuclease domain is required for chi fragment generation; this subunit has the helicase and 3' -&gt; 5' nuclease activities. This chain is ATP-dependent helicase/nuclease subunit A, found in Clostridium botulinum (strain Loch Maree / Type A3).